The sequence spans 421 residues: Inhibitor of growth protein 3 (421 aa).

The tract at residues 129–163 (PSQPVNNHHAHSHTPVEKRKYNPTSHHAAADHIPE) is disordered. Residues Lys-148, Lys-165, and Lys-167 each participate in a glycyl lysine isopeptide (Lys-Gly) (interchain with G-Cter in SUMO2) cross-link. Position 181 is an N6-acetyllysine (Lys-181). Residue Lys-256 forms a Glycyl lysine isopeptide (Lys-Gly) (interchain with G-Cter in SUMO2) linkage. Lys-264 is modified (N6-acetyllysine). Residues 286-296 (TQNASSSATDS) show a composition bias toward polar residues. Residues 286-323 (TQNASSSATDSRSGRKSKNNTKSSSQQSSSSSSSSSSS) are disordered. The span at 308-323 (SSSQQSSSSSSSSSSS) shows a compositional bias: low complexity. Residues 363–412 (PRYCICNQVSYGEMVGCDNQDCPIEWFHYGCVGLTEAPKGKWFCPQCTAA) form a PHD-type zinc finger. Residues Cys-366, Cys-368, Cys-379, Cys-384, His-390, Cys-393, Cys-406, and Cys-409 each contribute to the Zn(2+) site.

This sequence belongs to the ING family. As to quaternary structure, interacts with H3K4me3 and to a lesser extent with H3K4me2. Component of the NuA4 histone acetyltransferase complex which contains the catalytic subunit KAT5/TIP60 and the subunits EP400, TRRAP/PAF400, BRD8/SMAP, EPC1, DMAP1/DNMAP1, RUVBL1/TIP49, RUVBL2, ING3, actin, ACTL6A/BAF53A, MORF4L1/MRG15, MORF4L2/MRGX, MRGBP, YEATS4/GAS41, VPS72/YL1 and MEAF6. The NuA4 complex interacts with MYC. HTATTIP/TIP60, EPC1, and ING3 together constitute a minimal HAT complex termed Piccolo NuA4. Component of a SWR1-like complex.

It localises to the nucleus. Its function is as follows. Component of the NuA4 histone acetyltransferase (HAT) complex which is involved in transcriptional activation of select genes principally by acetylation of nucleosomal histones H4 and H2A. This modification may both alter nucleosome - DNA interactions and promote interaction of the modified histones with other proteins which positively regulate transcription. This complex may be required for the activation of transcriptional programs associated with oncogene and proto-oncogene mediated growth induction, tumor suppressor mediated growth arrest and replicative senescence, apoptosis, and DNA repair. NuA4 may also play a direct role in DNA repair when directly recruited to sites of DNA damage. Component of a SWR1-like complex that specifically mediates the removal of histone H2A.Z/H2AZ1 from the nucleosome. This Mus musculus (Mouse) protein is Inhibitor of growth protein 3 (Ing3).